A 147-amino-acid polypeptide reads, in one-letter code: Hemoglobin subunit beta (147 aa).

The 145-residue stretch at histidine 3–histidine 147 folds into the Globin domain. Positions 64 and 93 each coordinate heme b.

This sequence belongs to the globin family. Heterotetramer of 2 alpha (or alpha-D) and 2 beta chains. In terms of tissue distribution, red blood cells.

Functionally, involved in oxygen transport from the lung to the various peripheral tissues. The beta chain is a component of adult hemoglobin A and D. This chain is Hemoglobin subunit beta (HBB), found in Gallus gallus (Chicken).